A 2164-amino-acid polypeptide reads, in one-letter code: MRKLNSLFSLAVLLSLLCWGQTAAAQGGPKTAPSVTHQAVQKGIRTSKAKDLRDPIPAGMARIILEAHDVWEDGTGYQMLWDADHNQYGASIPEESFWFANGTIPAGLYDPFEYKVPVNADASFSPTNFVLDGTASADIPAGTYDYVIINPNPGIIYIVGEGVSKGNDYVVEAGKTYHFTVQRQGPGDAASVVVTGEGGNEFAPVQNLQWSVSGQTVTLTWQAPASDKRTYVLNESFDTQTLPNGWTMIDADGDGHNWLSTINVYNTATHTGDGAMFSKSWTASSGAKIDLSPDNYLVTPKFTVPENGKLSYWVSSQEPWTNEHYGVFLSTTGNEAANFTIKLLEETLGSGKPAPMNLVKSEGVKAPAPYQERTIDLSAYAGQQVYLAFRHFGCTGIFRLYLDDVAVSGEGSSNDYTYTVYRDNVVIAQNLTATTFNQENVAPGQYNYCVEVKYTAGVSPKVCKDVTVEGSNEFAPVQNLTGSAVGQKVTLKWDAPNGTPNPNPGTTTLSESFENGIPASWKTIDADGDGNNWTTTPPPGGSSFAGHNSAICVSSASYINFEGPQNPDNYLVTPELSLPNGGTLTFWVCAQDANYASEHYAVYASSTGNDASNFANALLEEVLTAKTVVTAPEAIRGTRVQGTWYQKTVQLPAGTKYVAFRHFGCTDFFWINLDDVEIKANGKRADFTETFESSTHGEAPAEWTTIDADGDGQGWLCLSSGQLGWLTAHGGTNVVASFSWNGMALNPDNYLISKDVTGATKVKYYYAVNDGFPGDHYAVMISKTGTNAGDFTVVFEETPNGINKGGARFGLSTEANGAKPQSVWIERTVDLPAGTKYVAFRHYNCSDLNYILLDDIQFTMGGSPTPTDYTYTVYRDGTKIKEGLTETTFEEDGVATGNHEYCVEVKYTAGVSPKECVNVTVDPVQFNPVQNLTGSAVGQKVTLKWDAPNGTPNPNPGTTTLSESFENGIPASWKTIDADGDGNNWTTTPPPGGTSFAGHNSAICVSSASYINFEGPQNPDNYLVTPELSLPNGGTLTFWVCAQDANYASEHYAVYASSTGNDASNFANALLEEVLTAKTVVTAPEAIRGTRVQGTWYQKTVQLPAGTKYVAFRHFGCTDFFWINLDDVEIKANGKRADFTETFESSTHGEAPAEWTTIDADGDGQGWLCLSSGQLDWLTAHGGTNVVASFSWNGMALNPDNYLISKDVTGATKVKYYYAVNDGFPGDHYAVMISKTGTNAGDFTVVFEETPNGINKGGARFGLSTEANGAKPQSVWIERTVDLPAGTKYVAFRHYNCSDLNYILLDDIQFTMGGSPTPTDYTYTVYRDGTKIKEGLTETTFEEDGVATGNHEYCVEVKYTAGVSPKECVNVTVDPVQFNPVQNLTGSAVGQKVTLKWDAPNGTPNPNPGTTTLSESFENGIPASWKTIDADGDGNNWTTTPPPGGTSFAGHNSAICVSSASYINFEGPQNPDNYLVTPELSLPNGGTLTFWVCAQDANYASEHYAVYASSTGNDASNFANALLEEVLTAKTVVTAPEAIRGTRVQGTWYQKTVQLPAGTKYVAFRHFGCTDFFWINLDDVEIKANGKRADFTETFESSTHGEAPAEWTTIDADGDGQGWLCLSSGQLGWLTAHGGTNVVASFSWNGMALNPDNYLISKDVTGATKVKYYYAVNDGFPGDHYAVMISKTGTNAGDFTVVFEETPNGINKGGARFGLSTEANGAKPQSVWIERTVDLPAGTKYVAFRHYNCSDLNYILLDDIQFTMGGSPTPTDYTYTVYRDGTKIKEGLTETTFEEDGVATGNHEYCVEVKYTAGVSPKECVNVTINPTQFNPVQNLTAEQAPNSMDAILKWNAPASKRAEVLNEDFENGIPASWKTIDADGDGNNWTTTPPPGGSSFAGHNSAICVSSASYINFEGPQNPDNYLVTPELSLPGGGTLTFWVCAQDANYASEHYAVYASSTGNDASNFANALLEEVLTAKTVVTAPEAIRGTRVQGTWYQKTVQLPAGTKYVAFRHFGCTDFFWINLDDVVITSGNAPSYTYTIYRNNTQIASGVTETTYRDPDLATGFYTYGVKVVYPNGESAIETATLNITSLADVTAQKPYTLTVVGKTITVTCQGEAMIYDMNGRRLAAGRNTVVYTAQGGHYAVMVVVDGKSYVEKLAVK.

A signal peptide spans 1-25 (MRKLNSLFSLAVLLSLLCWGQTAAA). Peptidase C25-like regions lie at residues 26 to 539 (QGGP…TPPP), 540 to 991 (GGSS…TPPP), and 992 to 1443 (GGTS…TPPP). Disordered stretches follow at residues 493 to 512 (WDAP…LSES) and 520 to 541 (SWKT…PPGG). Low complexity predominate over residues 496-508 (PNGTPNPNPGTTT).

This sequence belongs to the peptidase C25 family.

Agglutinates erythrocytes. This is Hemagglutinin A (hagA) from Porphyromonas gingivalis (strain ATCC BAA-308 / W83).